The following is a 440-amino-acid chain: Transposon Ty1-LR4 Gag polyprotein (440 aa).

Composition is skewed to polar residues over residues 1–10 (MESQQLSQHP), 48–60 (TKAN…TPAS), and 127–152 (QSQF…GNTF). 3 disordered regions span residues 1–93 (MESQ…MMTQ), 126–173 (PQSQ…RPPP), and 352–440 (GSRN…PGTY). Residues 153–165 (TDSSSADSDMTST) are compositionally biased toward low complexity. Residues 299-401 (NNGIHINNKV…NSKSKTARAH (103 aa)) are RNA-binding. Residues 402–418 (NVSTSNNSPSTDNDSIS) are compositionally biased toward low complexity. A Phosphoserine modification is found at serine 416. Positions 419–428 (KSTTEPIQLN) are enriched in polar residues. A compositionally biased stretch (basic and acidic residues) spans 429-440 (NKHDLHLRPGTY).

As to quaternary structure, homotrimer.

The protein resides in the cytoplasm. Functionally, capsid protein (CA) is the structural component of the virus-like particle (VLP), forming the shell that encapsulates the retrotransposons dimeric RNA genome. The particles are assembled from trimer-clustered units and there are holes in the capsid shells that allow for the diffusion of macromolecules. CA also has nucleocapsid-like chaperone activity, promoting primer tRNA(i)-Met annealing to the multipartite primer-binding site (PBS), dimerization of Ty1 RNA and initiation of reverse transcription. The polypeptide is Transposon Ty1-LR4 Gag polyprotein (TY1A-LR4) (Saccharomyces cerevisiae (strain ATCC 204508 / S288c) (Baker's yeast)).